Reading from the N-terminus, the 461-residue chain is D-phenylhydantoinase (461 aa).

His59, His61, and Lys151 together coordinate a divalent metal cation. Lys151 bears the N6-carboxylysine mark. Tyr156 provides a ligand contact to substrate. A divalent metal cation is bound by residues His182 and His239. Ser286 is a substrate binding site. Asp313 is an a divalent metal cation binding site. A substrate-binding site is contributed by Asn335.

Belongs to the metallo-dependent hydrolases superfamily. Hydantoinase/dihydropyrimidinase family. Homotetramer. A divalent metal cation is required as a cofactor. Post-translationally, carboxylation allows a single lysine to coordinate two divalent metal cations.

The enzyme catalyses D-5-phenylhydantoin + H2O = N-carbamoyl-D-phenylglycine + H(+). In terms of biological role, catalyzes the stereospecific hydrolysis of the cyclic amide bond of D-hydantoin derivatives with an aromatic side chains at the 5'-position. Has no activity on dihydropyrimidines. The physiological function is unknown. This is D-phenylhydantoinase from Escherichia coli (strain UTI89 / UPEC).